A 202-amino-acid chain; its full sequence is uncharacterized protein (202 aa).

A signal peptide spans 1–19 (MRRKNGFSVASVFILCSIA). The helical transmembrane segment at 177-199 (FLASSSSSFSSFLPSIAIILFFV) threads the bilayer.

Its subcellular location is the membrane. This is an uncharacterized protein from Caenorhabditis elegans.